The sequence spans 399 residues: Serine/threonine transporter SstT (399 aa).

Helical transmembrane passes span 8–28 (LSLV…AFLF), 37–57 (IFGE…VFVL), 77–97 (ILFL…IADL), 134–154 (PVVA…IILG), 178–198 (VIHL…AVTF), 212–232 (LLLV…PIMV), 284–304 (VIIP…ITVL), 312–332 (LGIS…SISA), and 348–370 (VACS…GMVI).

It belongs to the dicarboxylate/amino acid:cation symporter (DAACS) (TC 2.A.23) family.

The protein localises to the cell inner membrane. The enzyme catalyses L-serine(in) + Na(+)(in) = L-serine(out) + Na(+)(out). The catalysed reaction is L-threonine(in) + Na(+)(in) = L-threonine(out) + Na(+)(out). In terms of biological role, involved in the import of serine and threonine into the cell, with the concomitant import of sodium (symport system). The sequence is that of Serine/threonine transporter SstT from Acinetobacter baylyi (strain ATCC 33305 / BD413 / ADP1).